The primary structure comprises 743 residues: Mitochondrial exoribonuclease DSS-1 (743 aa).

The N-terminal 67 residues, Met-1 to Leu-67, are a transit peptide targeting the mitochondrion. Residues Thr-186 to Trp-542 enclose the RNB domain. Positions Val-320–Pro-357 are disordered. Residues His-325–Lys-344 are compositionally biased toward basic and acidic residues.

It belongs to the RNR ribonuclease family. In terms of assembly, component of the mitochondrial 3' processome (MPsome) complex composed at least of terminal uridylyltransferase KRET1/TUT1, 3'-5' exonuclease DSS1, MPSS1, MPSS2 and MPSS3. Within the complex, interacts with KRET1 and MPSS2. Component of the mitochondrial degradosome complex composed at least of 3'-5' exonuclease DSS1 and helicase SUV3. Within the complex, interacts with helicase SUV3.

The protein localises to the mitochondrion. The catalysed reaction is Exonucleolytic cleavage in the 3'- to 5'-direction to yield nucleoside 5'-phosphates.. 3'-5'exoribonuclease which is involved in the post-transcriptional processing, editing and degradation of mitochondrial RNAs, including mRNAs, rRNAs and guided RNAs (gRNA). As part of the mitochondrial 3' processome (MPsome), involved in the maturation of guided RNA (gRNA) precursors by catalyzing the processive 3'-5' degradation of uridylated gRNA precursors. Plays a role in the degradation of 12S rRNA processing intermediates and maturation by-products. The protein is Mitochondrial exoribonuclease DSS-1 of Trypanosoma brucei brucei.